The following is a 299-amino-acid chain: N-acetylaspartate synthetase (299 aa).

A compositionally biased stretch (pro residues) spans 44-57 (AAPGPAAAPPPAAG). Residues 44 to 70 (AAPGPAAAPPPAAGPQPHGGTGGAGPP) form a disordered region. Residues 60–70 (PHGGTGGAGPP) are compositionally biased toward gly residues. Residues 118–138 (YALLAALCFAVTRSLLLTCLV) traverse the membrane as a helical segment. Positions 143-280 (LALRYYYSRK…VLPGMTLSLA (138 aa)) constitute an N-acetyltransferase domain.

This sequence belongs to the NAT8 family. In terms of tissue distribution, expressed in brain, including in mesencephalic dopaminergic neurons of the substantia nigra and ventral tegmental area and oligodendrocytes. Expressed in cortical pyramidal neurons and granule cells of the hippocampus (at protein level).

The protein resides in the cytoplasm. The protein localises to the microsome membrane. It is found in the mitochondrion membrane. Its subcellular location is the endoplasmic reticulum membrane. It catalyses the reaction L-aspartate + acetyl-CoA = N-acetyl-L-aspartate + CoA + H(+). Its activity is regulated as follows. Aminooxyacetic acid (AOAA) blocks its activity in both cytoplasm and mitochondria. Functionally, catalyzes the synthesis of N-acetylaspartate acid (NAA) from L-aspartate and acetyl-CoA. Promotes dopamine uptake by regulating TNF-alpha expression. Attenuates methamphetamine-induced inhibition of dopamine uptake. In Rattus norvegicus (Rat), this protein is N-acetylaspartate synthetase (Nat8l).